Reading from the N-terminus, the 457-residue chain is MELHGALVASPGMGHAVPILELGKHLLNHHGFDRVTVFLVTDDVSRSKSLIGKTLMEEDPKFVIRFIPLDVSGQDLSGSLLTKLAEMMRKALPEIKSSVMELEPRPRVFVVDLLGTEALEVAKELGIMRKHVLVTTSAWFLAFTVYMASLDKQELYKQLSSIGALLIPGCSPVKFERAQDPRKYIRELAESQRIGDEVITADGVFVNTWHSLEQVTIGSFLDPENLGRVMRGVPVYPVGPLVRPAEPGLKHGVLDWLDLQPKESVVYVSFGSGGALTFEQTNELAYGLELTGHRFVWVVRPPAEDDPSASMFDKTKNETEPLDFLPNGFLDRTKDIGLVVRTWAPQEEILAHKSTGGFVTHCGWNSVLESIVNGVPMVAWPLYSEQKMNARMVSGELKIALQINVADGIVKKEVIAEMVKRVMDEEEGKEMRKNVKELKKTAEEALNMTHIPSAYFT.

Residues Ser-272, 343–344, 361–369, and 383–386 contribute to the UDP-alpha-D-glucose site; these read WA, HCGWNSVLE, and YSEQ.

It belongs to the UDP-glycosyltransferase family.

In Arabidopsis thaliana (Mouse-ear cress), this protein is UDP-glycosyltransferase 72C1 (UGT72C1).